The primary structure comprises 197 residues: dITP/XTP pyrophosphatase (197 aa).

S9–K14 contacts substrate. D70 serves as the catalytic Proton acceptor. D70 serves as a coordination point for Mg(2+). Substrate-binding positions include S71, F153–D156, K176, and H181–R182.

The protein belongs to the HAM1 NTPase family. As to quaternary structure, homodimer. It depends on Mg(2+) as a cofactor.

It catalyses the reaction XTP + H2O = XMP + diphosphate + H(+). The catalysed reaction is dITP + H2O = dIMP + diphosphate + H(+). The enzyme catalyses ITP + H2O = IMP + diphosphate + H(+). Pyrophosphatase that catalyzes the hydrolysis of nucleoside triphosphates to their monophosphate derivatives, with a high preference for the non-canonical purine nucleotides XTP (xanthosine triphosphate), dITP (deoxyinosine triphosphate) and ITP. Seems to function as a house-cleaning enzyme that removes non-canonical purine nucleotides from the nucleotide pool, thus preventing their incorporation into DNA/RNA and avoiding chromosomal lesions. This chain is dITP/XTP pyrophosphatase, found in Chromobacterium violaceum (strain ATCC 12472 / DSM 30191 / JCM 1249 / CCUG 213 / NBRC 12614 / NCIMB 9131 / NCTC 9757 / MK).